Reading from the N-terminus, the 120-residue chain is Holo-[acyl-carrier-protein] synthase (120 aa).

Positions 8 and 60 each coordinate Mg(2+).

It belongs to the P-Pant transferase superfamily. AcpS family. Requires Mg(2+) as cofactor.

Its subcellular location is the cytoplasm. The catalysed reaction is apo-[ACP] + CoA = holo-[ACP] + adenosine 3',5'-bisphosphate + H(+). Functionally, transfers the 4'-phosphopantetheine moiety from coenzyme A to a Ser of acyl-carrier-protein. This Anaplasma marginale (strain Florida) protein is Holo-[acyl-carrier-protein] synthase.